The chain runs to 191 residues: MRKIGYIRVSSTNQNPSRQFQQLNEIGMDIIYEEKVSGATKDREQLQKVLDDLQEDDIIYVTDLTRITRSTQDLFELIDNIRDKKASLKSLKDTWLDLSEDNPYSQFLITVMAGVNQLERDLIRMRQREGIELAKKEGKFKGRLKKYHKNHAGMNYAVKLYKEGNMTVNQICEITNVSRASLYRKLSEVNN.

One can recognise a Resolvase/invertase-type recombinase catalytic domain in the interval 2–138; sequence RKIGYIRVSS…EGIELAKKEG (137 aa). The active-site O-(5'-phospho-DNA)-serine intermediate is serine 10. The segment at residues 168–187 is a DNA-binding region (H-T-H motif); the sequence is VNQICEITNVSRASLYRKLS.

This sequence belongs to the site-specific recombinase resolvase family.

Its function is as follows. Resolvase catalyzes the resolution (a site-specific recombination) of the cointegrated replicon to yield the final transposition products. The chain is Transposon Tn1546 resolvase from Enterococcus faecium (Streptococcus faecium).